Reading from the N-terminus, the 709-residue chain is Elongation factor G (709 aa).

The 290-residue stretch at 8 to 297 folds into the tr-type G domain; the sequence is ANTRNIGIMA…AVIDYLPSPL (290 aa). GTP is bound by residues 17-24, 81-85, and 135-138; these read AHVDAGKT, DTPGH, and NKMD.

The protein belongs to the TRAFAC class translation factor GTPase superfamily. Classic translation factor GTPase family. EF-G/EF-2 subfamily.

The protein localises to the cytoplasm. In terms of biological role, catalyzes the GTP-dependent ribosomal translocation step during translation elongation. During this step, the ribosome changes from the pre-translocational (PRE) to the post-translocational (POST) state as the newly formed A-site-bound peptidyl-tRNA and P-site-bound deacylated tRNA move to the P and E sites, respectively. Catalyzes the coordinated movement of the two tRNA molecules, the mRNA and conformational changes in the ribosome. This chain is Elongation factor G, found in Lactococcus lactis subsp. lactis (strain IL1403) (Streptococcus lactis).